Here is a 142-residue protein sequence, read N- to C-terminus: Putative pre-16S rRNA nuclease (142 aa).

The protein belongs to the YqgF nuclease family.

It is found in the cytoplasm. Its function is as follows. Could be a nuclease involved in processing of the 5'-end of pre-16S rRNA. The polypeptide is Putative pre-16S rRNA nuclease (Staphylococcus epidermidis (strain ATCC 35984 / DSM 28319 / BCRC 17069 / CCUG 31568 / BM 3577 / RP62A)).